The following is a 254-amino-acid chain: Segregation and condensation protein A (254 aa).

Belongs to the ScpA family. Component of a cohesin-like complex composed of ScpA, ScpB and the Smc homodimer, in which ScpA and ScpB bind to the head domain of Smc. The presence of the three proteins is required for the association of the complex with DNA.

It is found in the cytoplasm. In terms of biological role, participates in chromosomal partition during cell division. May act via the formation of a condensin-like complex containing Smc and ScpB that pull DNA away from mid-cell into both cell halves. This chain is Segregation and condensation protein A, found in Clostridium tetani (strain Massachusetts / E88).